The following is a 746-amino-acid chain: NAD(P)H-quinone oxidoreductase subunit 5, chloroplastic (746 aa).

A run of 16 helical transmembrane segments spans residues 9–29, 40–60, 89–109, 125–145, 147–167, 185–205, 221–241, 258–278, 280–300, 327–347, 354–374, 396–416, 425–445, 547–567, 608–628, and 723–743; these read WIIP…LLLF, WTFL…YLSI, IDPL…LVLI, FAYM…SNLI, VYFF…FWFT, GDFG…SFEF, VNFL…IAKS, TPIS…FLVA, LLPL…IGII, LGYM…FHLI, ALLF…VGYS, TAFL…CFWS, LLFS…TAFY, ILFP…IGIP, FSVS…KPFY, and YLFL…FFYF.

This sequence belongs to the complex I subunit 5 family. As to quaternary structure, NDH is composed of at least 16 different subunits, 5 of which are encoded in the nucleus.

Its subcellular location is the plastid. It is found in the chloroplast thylakoid membrane. It catalyses the reaction a plastoquinone + NADH + (n+1) H(+)(in) = a plastoquinol + NAD(+) + n H(+)(out). The catalysed reaction is a plastoquinone + NADPH + (n+1) H(+)(in) = a plastoquinol + NADP(+) + n H(+)(out). Functionally, NDH shuttles electrons from NAD(P)H:plastoquinone, via FMN and iron-sulfur (Fe-S) centers, to quinones in the photosynthetic chain and possibly in a chloroplast respiratory chain. The immediate electron acceptor for the enzyme in this species is believed to be plastoquinone. Couples the redox reaction to proton translocation, and thus conserves the redox energy in a proton gradient. This Barbarea verna (Land cress) protein is NAD(P)H-quinone oxidoreductase subunit 5, chloroplastic (ndhF).